The chain runs to 390 residues: Glutamyl-tRNA reductase (390 aa).

Residues 46–49, serine 96, 101–103, and glutamine 107 contribute to the substrate site; these read TCNR and EAQ. Cysteine 47 (nucleophile) is an active-site residue. 176–181 lines the NADP(+) pocket; sequence GAGEMA.

Belongs to the glutamyl-tRNA reductase family. In terms of assembly, homodimer.

It carries out the reaction (S)-4-amino-5-oxopentanoate + tRNA(Glu) + NADP(+) = L-glutamyl-tRNA(Glu) + NADPH + H(+). It participates in porphyrin-containing compound metabolism; protoporphyrin-IX biosynthesis; 5-aminolevulinate from L-glutamyl-tRNA(Glu): step 1/2. Catalyzes the NADPH-dependent reduction of glutamyl-tRNA(Glu) to glutamate 1-semialdehyde (GSA). This chain is Glutamyl-tRNA reductase, found in Thermus thermophilus (strain ATCC 27634 / DSM 579 / HB8).